We begin with the raw amino-acid sequence, 79 residues long: Large ribosomal subunit protein uL24 (79 aa).

Positions 1-29 (MPKLKKLLLKVSTSKPNTNPPSQNEEKGT) are disordered. The segment covering 11-23 (VSTSKPNTNPPSQ) has biased composition (polar residues).

It belongs to the universal ribosomal protein uL24 family. In terms of assembly, part of the 50S ribosomal subunit.

Functionally, one of two assembly initiator proteins, it binds directly to the 5'-end of the 23S rRNA, where it nucleates assembly of the 50S subunit. In terms of biological role, one of the proteins that surrounds the polypeptide exit tunnel on the outside of the subunit. This Onion yellows phytoplasma (strain OY-M) protein is Large ribosomal subunit protein uL24 (rplX).